Consider the following 195-residue polypeptide: Probable nicotinate-nucleotide adenylyltransferase (195 aa).

The protein belongs to the NadD family.

The enzyme catalyses nicotinate beta-D-ribonucleotide + ATP + H(+) = deamido-NAD(+) + diphosphate. Its pathway is cofactor biosynthesis; NAD(+) biosynthesis; deamido-NAD(+) from nicotinate D-ribonucleotide: step 1/1. In terms of biological role, catalyzes the reversible adenylation of nicotinate mononucleotide (NaMN) to nicotinic acid adenine dinucleotide (NaAD). This chain is Probable nicotinate-nucleotide adenylyltransferase, found in Chlorobaculum parvum (strain DSM 263 / NCIMB 8327) (Chlorobium vibrioforme subsp. thiosulfatophilum).